Consider the following 589-residue polypeptide: CTP synthase (589 aa).

The segment at 1-281 (MPQSRTHSRT…DAYVVRQLGL (281 aa)) is amidoligase domain. Residue serine 23 participates in CTP binding. Serine 23 provides a ligand contact to UTP. ATP-binding positions include 24-29 (SLGKGL) and aspartate 81. Aspartate 81 and glutamate 155 together coordinate Mg(2+). Residues 162–164 (DIE), 202–207 (KTKPTQ), and lysine 238 contribute to the CTP site. UTP contacts are provided by residues 202-207 (KTKPTQ) and lysine 238. The Glutamine amidotransferase type-1 domain occupies 306 to 554 (RIALVGKYVD…VDAALRHKLE (249 aa)). Residue glycine 369 coordinates L-glutamine. Cysteine 396 serves as the catalytic Nucleophile; for glutamine hydrolysis. L-glutamine contacts are provided by residues 397 to 400 (LGLQ), glutamate 419, and arginine 480. Residues histidine 527 and glutamate 529 contribute to the active site. Residues 562 to 589 (HGEERAAADDEIAESADRDEVASVDSAG) are disordered.

This sequence belongs to the CTP synthase family. Homotetramer.

It carries out the reaction UTP + L-glutamine + ATP + H2O = CTP + L-glutamate + ADP + phosphate + 2 H(+). The enzyme catalyses L-glutamine + H2O = L-glutamate + NH4(+). It catalyses the reaction UTP + NH4(+) + ATP = CTP + ADP + phosphate + 2 H(+). Its pathway is pyrimidine metabolism; CTP biosynthesis via de novo pathway; CTP from UDP: step 2/2. Allosterically activated by GTP, when glutamine is the substrate; GTP has no effect on the reaction when ammonia is the substrate. The allosteric effector GTP functions by stabilizing the protein conformation that binds the tetrahedral intermediate(s) formed during glutamine hydrolysis. Inhibited by the product CTP, via allosteric rather than competitive inhibition. Its function is as follows. Catalyzes the ATP-dependent amination of UTP to CTP with either L-glutamine or ammonia as the source of nitrogen. Regulates intracellular CTP levels through interactions with the four ribonucleotide triphosphates. In Rhodococcus opacus (strain B4), this protein is CTP synthase.